A 148-amino-acid chain; its full sequence is Putative lysozyme C-2 (148 aa).

An N-terminal signal peptide occupies residues 1–18 (MKALLVLGFLLLSASVQA). The C-type lysozyme domain maps to 19–148 (KVFKHCELAR…LSGYIRNCGV (130 aa)). Intrachain disulfides connect cysteine 24–cysteine 146, cysteine 48–cysteine 134, cysteine 83–cysteine 99, and cysteine 95–cysteine 113. Active-site residues include glutamate 53 and aspartate 71.

The protein belongs to the glycosyl hydrolase 22 family. As to quaternary structure, monomer.

Its subcellular location is the secreted. It catalyses the reaction Hydrolysis of (1-&gt;4)-beta-linkages between N-acetylmuramic acid and N-acetyl-D-glucosamine residues in a peptidoglycan and between N-acetyl-D-glucosamine residues in chitodextrins.. In terms of biological role, lysozymes have primarily a bacteriolytic function; those in tissues and body fluids are associated with the monocyte-macrophage system and enhance the activity of immunoagents. In the intestine they may also have a digestive function. The polypeptide is Putative lysozyme C-2 (Lyz2) (Rattus norvegicus (Rat)).